A 121-amino-acid chain; its full sequence is Basic phospholipase A2 (121 aa).

Intrachain disulfides connect Cys-26-Cys-114, Cys-28-Cys-44, Cys-43-Cys-94, Cys-49-Cys-121, Cys-50-Cys-87, Cys-57-Cys-80, and Cys-74-Cys-85. The Ca(2+) site is built by Tyr-27, Gly-29, and Gly-31. His-47 is a catalytic residue. Asp-48 is a binding site for Ca(2+). Asp-88 is an active-site residue.

In terms of assembly, homopentamer. Requires Ca(2+) as cofactor. In terms of tissue distribution, expressed by the venom gland.

The protein localises to the secreted. It carries out the reaction a 1,2-diacyl-sn-glycero-3-phosphocholine + H2O = a 1-acyl-sn-glycero-3-phosphocholine + a fatty acid + H(+). Snake venom phospholipase A2 (PLA2) that displays moderate myotoxic activity in vivo, and cytotoxic activity in vitro. In vitro, shows anticoagulant activity on human plasma and in mice causes inflammatory cell infiltration and myonecrosis in the gastrocnemius muscles of CD-1 mice 3 hours after injection (100 ug). PLA2 catalyzes the calcium-dependent hydrolysis of the 2-acyl groups in 3-sn-phosphoglycerides. This is Basic phospholipase A2 from Porthidium ophryomegas (Slender hognose viper).